We begin with the raw amino-acid sequence, 256 residues long: Tryptophan synthase alpha chain (256 aa).

Residues Glu51 and Asp62 each act as proton acceptor in the active site.

This sequence belongs to the TrpA family. As to quaternary structure, tetramer of two alpha and two beta chains.

The catalysed reaction is (1S,2R)-1-C-(indol-3-yl)glycerol 3-phosphate + L-serine = D-glyceraldehyde 3-phosphate + L-tryptophan + H2O. Its pathway is amino-acid biosynthesis; L-tryptophan biosynthesis; L-tryptophan from chorismate: step 5/5. Its function is as follows. The alpha subunit is responsible for the aldol cleavage of indoleglycerol phosphate to indole and glyceraldehyde 3-phosphate. In Solidesulfovibrio magneticus (strain ATCC 700980 / DSM 13731 / RS-1) (Desulfovibrio magneticus), this protein is Tryptophan synthase alpha chain.